Here is a 335-residue protein sequence, read N- to C-terminus: Phospholipid scramblase 1 (335 aa).

The proline-rich domain (PRD) stretch occupies residues 1–101; it reads MEKHGPPEHA…NHPGGPGGTP (101 aa). Residues 1-102 form a disordered region; sequence MEKHGPPEHA…HPGGPGGTPW (102 aa). The Cytoplasmic segment spans residues 1-305; that stretch reads MEKHGPPEHA…IQFPLDLDVK (305 aa). 6 consecutive repeat copies span residues 23 to 29, 30 to 36, 37 to 43, 44 to 50, 51 to 57, and 58 to 64. Positions 23 to 71 are 7 X 7 AA tandem repeats of Q-G-P-Y-[AP]-G-P; sequence QGPYPGPQGPYPGPQGPYAGPQGPYPGPQGPYAGPQGPYPGPQPGYPVP. The segment covering 26–37 has biased composition (pro residues); sequence YPGPQGPYPGPQ. Residues 59–72 show a composition bias toward pro residues; the sequence is GPYPGPQPGYPVPP. The SH3-binding 1 signature appears at 64–72; that stretch reads PQPGYPVPP. Residues 65 to 71 form a 7; approximate repeat; sequence QPGYPVP. The residue at position 91 (Tyr-91) is a Phosphotyrosine; by ABL. Positions 101-109 match the SH3-binding 2 motif; it reads PWMQAPPPP. At Thr-178 the chain carries Phosphothreonine; by PKC/PRKCD. Residues Cys-201, Cys-202, Cys-205, and Cys-206 are each lipidated (S-palmitoyl cysteine). The short motif at 274–283 is the Nuclear localization signal element; the sequence is GKISKQWSGF. A helical transmembrane segment spans residues 306-322; sequence MKAVMLGACFLIDFMFF. Over 323–335 the chain is Extracellular; that stretch reads ERTGNEEQRSGVW.

Belongs to the phospholipid scramblase family. As to quaternary structure, forms homooligomers in the presence of calcium. Interacts with ABL. Interacts with RELT, RELL1 and RELL2. Interacts with OXSR1 in the presence of RELT. Interacts with OCLN, TOP2A and TOP2B. Interacts with TRPC1, TRPC4 and TRPC5. Interacts with ILDR1. Ca(2+) serves as cofactor. Mg(2+) is required as a cofactor. It depends on Zn(2+) as a cofactor. Phosphorylated on tyrosine residues. Phosphorylated by OXSR1 in the presence of RELT. Phosphorylation at Thr-178 by PKC/PKCD increases its phospholipid scramblase activity during both cell stimulation and apoptosis. Post-translationally, palmitoylation is required for its phospholipid scramblase activity. Palmitoylation regulates its localization to the cell membrane or the nucleus; trafficking to the cell membrane is dependent upon palmitoylation whereas in the absence of palmitoylation, localizes to the nucleus.

The protein localises to the cell membrane. The protein resides in the nucleus. It localises to the cytoplasm. Its subcellular location is the perinuclear region. It catalyses the reaction a 1,2-diacyl-sn-glycero-3-phosphocholine(in) = a 1,2-diacyl-sn-glycero-3-phosphocholine(out). The catalysed reaction is a 1,2-diacyl-sn-glycero-3-phosphoethanolamine(in) = a 1,2-diacyl-sn-glycero-3-phosphoethanolamine(out). The enzyme catalyses a 1,2-diacyl-sn-glycero-3-phospho-L-serine(in) = a 1,2-diacyl-sn-glycero-3-phospho-L-serine(out). Its function is as follows. Catalyzes calcium-induced ATP-independent rapid bidirectional and non-specific distribution of phospholipids (lipid scrambling or lipid flip-flop) between the inner and outer leaflet of the plasma membrane resulting in collapse of the phospholipid asymmetry which leads to phosphatidylserine externalization on the cell surface. Mediates calcium-dependent phosphatidylserine externalization and apoptosis in neurons via its association with TRPC5. Also exhibits magnesium-dependent nuclease activity against double-stranded DNA and RNA but not single-stranded DNA and can enhance DNA decatenation mediated by TOP2A. Negatively regulates FcR-mediated phagocytosis in differentiated macrophages. May contribute to cytokine-regulated cell proliferation and differentiation. In Rattus norvegicus (Rat), this protein is Phospholipid scramblase 1 (Plscr1).